Consider the following 644-residue polypeptide: Macrolide export ATP-binding/permease protein MacB (644 aa).

Residues 4–242 (IECKNINRCF…SNVGRIREKA (239 aa)) form the ABC transporter domain. 40–47 (GQSGSGKS) serves as a coordination point for ATP. 4 helical membrane-spanning segments follow: residues 270-290 (LLTMLGIIIGIASVVSVVALG), 524-544 (IALISLVVGGIGVMNIMLVSV), 574-594 (LICIIGGLVGVGLSAAVSLVF), and 607-627 (AASVIGAVACSTGIGIAFGFM).

Belongs to the ABC transporter superfamily. Macrolide exporter (TC 3.A.1.122) family. Homodimer.

The protein resides in the cell inner membrane. In terms of biological role, non-canonical ABC transporter that contains transmembrane domains (TMD), which form a pore in the inner membrane, and an ATP-binding domain (NBD), which is responsible for energy generation. Confers resistance against macrolides. The polypeptide is Macrolide export ATP-binding/permease protein MacB (Neisseria gonorrhoeae (strain ATCC 700825 / FA 1090)).